Reading from the N-terminus, the 1022-residue chain is ATPase MORC2B (1022 aa).

A2 carries the post-translational modification N-acetylalanine. ATP-binding positions include N39, 87–89, and 99–105; these read SAK and RYGNGLK. N39 is a Mg(2+) binding site. Residues 285–362 are a coiled coil; that stretch reads KTRAEQEVKK…RDAKQQALKE (78 aa). Residue K427 participates in ATP binding. The segment at 490–544 adopts a CW-type zinc-finger fold; sequence AMQVPTTIQCDLCLKWRTLPFQLSAVEEGYPINWVCSMNPDPEQDQCEAFELKQK. Zn(2+) is bound by residues C499, C502, C525, and C536. Residues 555 to 583 adopt a coiled-coil conformation; it reads KTQEERQKQLTEKIQQEQRKLKALKKIKP. S615 bears the Phosphoserine mark. Residue K649 forms a Glycyl lysine isopeptide (Lys-Gly) (interchain with G-Cter in SUMO2) linkage. A phosphoserine mark is found at S690, S724, S733, and S737. Residue K758 forms a Glycyl lysine isopeptide (Lys-Gly) (interchain with G-Cter in SUMO2) linkage. S768 and S770 each carry phosphoserine. T827 is modified (phosphothreonine). 2 positions are modified to phosphoserine: S846 and S851. A Glycyl lysine isopeptide (Lys-Gly) (interchain with G-Cter in SUMO2) cross-link involves residue K922. Residues 962-1001 adopt a coiled-coil conformation; sequence QAKVSEESLRISQKKLQETEEKLQKLRTNIQTLLQMAQQG.

As to quaternary structure, interacts with Morc2a. As to expression, protein is abundant in testes but not detected in other adult tissues examined (at protein level). Detected in germ cells with a distinct developmental-specific expression pattern but not in somatic cells such as Sertoli cells.

The protein localises to the nucleus. The catalysed reaction is ATP + H2O = ADP + phosphate + H(+). Functionally, required for chromosomal synapsis and meiotic recombination in males and females. This is ATPase MORC2B from Mus musculus (Mouse).